A 342-amino-acid polypeptide reads, in one-letter code: Serpentine receptor class r-10 (342 aa).

Over 1 to 11 (MTGELWLTLVD) the chain is Extracellular. A helical transmembrane segment spans residues 12 to 32 (TADIVGFSMTFCVNIVLLFLL). At 33–38 (KNRGKN) the chain is on the cytoplasmic side. A helical membrane pass occupies residues 39 to 59 (LGTYKHLMAFFSVFSIFYAII). The Extracellular segment spans residues 60 to 92 (ESILRPIMHIENATFFLISRKRFNYSTRLGKIN). N-linked (GlcNAc...) asparagine glycans are attached at residues Asn-71 and Asn-83. A helical transmembrane segment spans residues 93 to 113 (SAFYCACFATSFVVSGVHFVY). At 114 to 131 (RFFASCKPHLLRSFNMPY) the chain is on the cytoplasmic side. A helical membrane pass occupies residues 132-152 (LLLWPLGCSIPVMMWASVSYF). At 153 to 202 (LYPDTAFTEAAVTNVLNTHYHSIKKDNVSYIAYVYYQYDENGVRYVYLKN) the chain is on the extracellular side. N-linked (GlcNAc...) asparagine glycosylation occurs at Asn-179. The chain crosses the membrane as a helical span at residues 203–223 (LLGCFVHYFVMSATFVVMFIC). The Cytoplasmic segment spans residues 224–257 (GYLTWKTMRKHKTASDRTRQLQKQLFKALVLQTL). The chain crosses the membrane as a helical span at residues 258–278 (IPTIFMYAPTGVMFIAPFFSI). Over 279–285 (NLNANAN) the chain is Extracellular. A helical membrane pass occupies residues 286 to 306 (FIVFCSFLYPGLDPLILILII). Residues 307 to 342 (RDFRQTVFKFFCLRKKNSVDESRSTTRANMSQVATH) lie on the Cytoplasmic side of the membrane.

This sequence belongs to the nematode receptor-like protein str family. As to quaternary structure, interacts with odr-4.

The protein resides in the cell projection. Its subcellular location is the cilium membrane. An odorant receptor which affects chemotaxis to the volatile odorant diacetyl. Specifies AWA neuronal cell fate via the odr-7 pathway. The polypeptide is Serpentine receptor class r-10 (Caenorhabditis briggsae).